A 118-amino-acid polypeptide reads, in one-letter code: Large ribosomal subunit protein bL19 (118 aa).

It belongs to the bacterial ribosomal protein bL19 family.

Its function is as follows. This protein is located at the 30S-50S ribosomal subunit interface and may play a role in the structure and function of the aminoacyl-tRNA binding site. This Geotalea uraniireducens (strain Rf4) (Geobacter uraniireducens) protein is Large ribosomal subunit protein bL19.